A 175-amino-acid polypeptide reads, in one-letter code: Transcription factor E (175 aa).

The 83-residue stretch at 8 to 90 folds into the HTH TFE/IIEalpha-type domain; sequence NDPVIQKYLH…LWTFQYENIP (83 aa).

The protein belongs to the TFE family. In terms of assembly, monomer. Interaction with RNA polymerase subunits RpoF and RpoE is necessary for Tfe stimulatory transcription activity. Able to interact with Tbp and RNA polymerase in the absence of DNA promoter. Interacts both with the preinitiation and elongation complexes.

In terms of biological role, transcription factor that plays a role in the activation of archaeal genes transcribed by RNA polymerase. Facilitates transcription initiation by enhancing TATA-box recognition by TATA-box-binding protein (Tbp), and transcription factor B (Tfb) and RNA polymerase recruitment. Not absolutely required for transcription in vitro, but particularly important in cases where Tbp or Tfb function is not optimal. It dynamically alters the nucleic acid-binding properties of RNA polymerases by stabilizing the initiation complex and destabilizing elongation complexes. Seems to translocate with the RNA polymerase following initiation and acts by binding to the non template strand of the transcription bubble in elongation complexes. This chain is Transcription factor E, found in Natronomonas pharaonis (strain ATCC 35678 / DSM 2160 / CIP 103997 / JCM 8858 / NBRC 14720 / NCIMB 2260 / Gabara) (Halobacterium pharaonis).